Reading from the N-terminus, the 116-residue chain is Ribonuclease P protein component (116 aa).

This sequence belongs to the RnpA family. In terms of assembly, consists of a catalytic RNA component (M1 or rnpB) and a protein subunit.

It catalyses the reaction Endonucleolytic cleavage of RNA, removing 5'-extranucleotides from tRNA precursor.. Its function is as follows. RNaseP catalyzes the removal of the 5'-leader sequence from pre-tRNA to produce the mature 5'-terminus. It can also cleave other RNA substrates such as 4.5S RNA. The protein component plays an auxiliary but essential role in vivo by binding to the 5'-leader sequence and broadening the substrate specificity of the ribozyme. This chain is Ribonuclease P protein component, found in Picosynechococcus sp. (strain ATCC 27264 / PCC 7002 / PR-6) (Agmenellum quadruplicatum).